An 850-amino-acid chain; its full sequence is Protein monoglycylase TTLL8 (850 aa).

Disordered regions lie at residues 1-29 (MEPE…QGIS) and 228-254 (RSSR…DAEN). The TTL domain maps to 222–580 (SHQSCSRSSR…DRSCDIGNFE (359 aa)). ATP contacts are provided by residues Lys-354, 360 to 361 (RG), 392 to 395 (QKYI), 405 to 407 (KFD), and 449 to 450 (CN). Residue Arg-360 coordinates a protein. Asp-527, Glu-540, and Asn-542 together coordinate Mg(2+). Residue Glu-540 coordinates ATP. Positions 627–652 (AQPLKARGPSAMPDPAQGPPSPALQR) are disordered.

Mg(2+) is required as a cofactor.

It is found in the cytoplasm. The protein localises to the cytoskeleton. The protein resides in the cell projection. It localises to the cilium. Its subcellular location is the cilium axoneme. It is found in the flagellum axoneme. The enzyme catalyses L-glutamyl-[protein] + glycine + ATP = glycyl-L-glutamyl-[protein] + ADP + phosphate + H(+). Its function is as follows. Monoglycylase which modifies both tubulin and non-tubulin proteins, adding a single glycine to the gamma-carboxyl groups of specific glutamate residues to generate monoglycine side chains within the C-terminal tail of target proteins. Not involved in elongation step of the polyglycylation reaction. Preferentially monoglycylates alpha-tubulin over beta-tubulin. Together with TTLL3, mediates microtubule glycylation of primary and motile cilia, which is essential for their stability and maintenance. Together with TTLL3, glycylates sperm flagella which regulates axonemal dynein motor activity, thereby controlling flagellar beat, directional sperm swimming and male fertility. Monoglycylates non-tubulin proteins such as ANP32A, ANP32B, SET, NCL and NAP1. This Homo sapiens (Human) protein is Protein monoglycylase TTLL8.